A 130-amino-acid polypeptide reads, in one-letter code: MSEEFKIEIVNPEKSFLSKEDVTEVVVPAFEGEMGILKDHISIISFLKPGIIKIFSKSGEDNYYVEDGIVEFKNNNLSVLTSSIFNIKDIDKDKISELLTQAEENSKNSDITDQNKYLVDQKIDVLKTLN.

The protein belongs to the ATPase epsilon chain family. F-type ATPases have 2 components, CF(1) - the catalytic core - and CF(0) - the membrane proton channel. CF(1) has five subunits: alpha(3), beta(3), gamma(1), delta(1), epsilon(1). CF(0) has three main subunits: a, b and c.

The protein localises to the cell inner membrane. Functionally, produces ATP from ADP in the presence of a proton gradient across the membrane. The sequence is that of ATP synthase epsilon chain from Pelagibacter ubique (strain HTCC1062).